Reading from the N-terminus, the 274-residue chain is 2,3,4,5-tetrahydropyridine-2,6-dicarboxylate N-succinyltransferase (274 aa).

Substrate contacts are provided by R104 and D141.

This sequence belongs to the transferase hexapeptide repeat family. In terms of assembly, homotrimer.

The protein resides in the cytoplasm. It carries out the reaction (S)-2,3,4,5-tetrahydrodipicolinate + succinyl-CoA + H2O = (S)-2-succinylamino-6-oxoheptanedioate + CoA. It functions in the pathway amino-acid biosynthesis; L-lysine biosynthesis via DAP pathway; LL-2,6-diaminopimelate from (S)-tetrahydrodipicolinate (succinylase route): step 1/3. In Shewanella sediminis (strain HAW-EB3), this protein is 2,3,4,5-tetrahydropyridine-2,6-dicarboxylate N-succinyltransferase.